A 240-amino-acid chain; its full sequence is Octanoyltransferase (240 aa).

One can recognise a BPL/LPL catalytic domain in the interval 49 to 233 (GEAPELVWLL…AFESVFGATR (185 aa)). Residues 87–94 (RGGQVTYH), 162–164 (AIG), and 175–177 (GIA) contribute to the substrate site. C193 (acyl-thioester intermediate) is an active-site residue.

The protein belongs to the LipB family.

The protein resides in the cytoplasm. The catalysed reaction is octanoyl-[ACP] + L-lysyl-[protein] = N(6)-octanoyl-L-lysyl-[protein] + holo-[ACP] + H(+). It functions in the pathway protein modification; protein lipoylation via endogenous pathway; protein N(6)-(lipoyl)lysine from octanoyl-[acyl-carrier-protein]: step 1/2. Its function is as follows. Catalyzes the transfer of endogenously produced octanoic acid from octanoyl-acyl-carrier-protein onto the lipoyl domains of lipoate-dependent enzymes. Lipoyl-ACP can also act as a substrate although octanoyl-ACP is likely to be the physiological substrate. The chain is Octanoyltransferase from Bradyrhizobium sp. (strain BTAi1 / ATCC BAA-1182).